A 31-amino-acid chain; its full sequence is Photosystem II reaction center protein T (31 aa).

A helical transmembrane segment spans residues 3–23 (ALVYTFLLIGTLGIIFFAIFF).

Belongs to the PsbT family. As to quaternary structure, PSII is composed of 1 copy each of membrane proteins PsbA, PsbB, PsbC, PsbD, PsbE, PsbF, PsbH, PsbI, PsbJ, PsbK, PsbL, PsbM, PsbT, PsbY, PsbZ, Psb30/Ycf12, at least 3 peripheral proteins of the oxygen-evolving complex and a large number of cofactors. It forms dimeric complexes.

It is found in the plastid. Its subcellular location is the chloroplast thylakoid membrane. Its function is as follows. Found at the monomer-monomer interface of the photosystem II (PS II) dimer, plays a role in assembly and dimerization of PSII. PSII is a light-driven water plastoquinone oxidoreductase, using light energy to abstract electrons from H(2)O, generating a proton gradient subsequently used for ATP formation. The protein is Photosystem II reaction center protein T of Tetradesmus obliquus (Green alga).